Reading from the N-terminus, the 793-residue chain is Protocadherin beta-7 (793 aa).

The signal sequence occupies residues 1 to 26; sequence MEARVERAVQKRQVLFLCVFLGMSWA. Residues 27–688 are Extracellular-facing; it reads GAEPLRYFVA…DQANSLTVYL (662 aa). 5 Cadherin domains span residues 35-133, 138-242, 247-347, 352-451, and 456-561; these read VAEE…APVF, ISLK…APDF, YKVQ…RPEL, LTSP…APAF, and YTLF…SPFV. The N-linked (GlcNAc...) asparagine glycan is linked to asparagine 169. N-linked (GlcNAc...) asparagine glycosylation is found at asparagine 418 and asparagine 436. Asparagine 567 carries N-linked (GlcNAc...) asparagine glycosylation. The Cadherin 6 domain occupies 568 to 671; that stretch reads SSAPCTEPLP…LVDGFSQPYL (104 aa). The helical transmembrane segment at 689–709 threads the bilayer; that stretch reads VVALASVSSLFLLSVLLFVAV. Residues 710–793 are Cytoplasmic-facing; it reads RLCRRSRAAP…NRPFQNNLGF (84 aa).

It localises to the cell membrane. Potential calcium-dependent cell-adhesion protein. May be involved in the establishment and maintenance of specific neuronal connections in the brain. This is Protocadherin beta-7 (PCDHB7) from Homo sapiens (Human).